The sequence spans 516 residues: Importin subunit alpha-B (516 aa).

Over residues 1–29 the composition is skewed to basic and acidic residues; it reads MQRSKQETRKSQYKKSIDSDESRRKREEA. Residues 1-54 form a disordered region; it reads MQRSKQETRKSQYKKSIDSDESRRKREEASLSIRKNKREESLLKKRTQAVPGST. One can recognise an IBB domain in the interval 1 to 55; that stretch reads MQRSKQETRKSQYKKSIDSDESRRKREEASLSIRKNKREESLLKKRTQAVPGSTP. ARM repeat units lie at residues 55–96, 100–140, 143–182, 185–227, 229–268, 271–310, 313–352, 355–394, and 398–437; these read PVKV…KLLS, SPPI…NIAS, PEQTRVVIENGAIQVFVLLLSSPHDDVREQAVWALGNIAG, HYCR…NFCR, KPQPPFEIVRASLPVLAKLIYYQDEEVLIDACWALSYLSD, NERIQEVIDAKVCRKMVELLGHPTIAVQTPALRTIGNIVT, DNQTQIVLSVQALSHLLNLLQSPKRAIRKEACWTISNITA, KNQIQQVIDANIIPSLVYLLANAEFEIQKEAAWAISNATS, and PQQIHFLVSQGCVKPLCDLLKVSDPRIINVALEGIENILV. The tract at residues 490 to 516 is disordered; that stretch reads EQEDEGDLMPEGSSFSFSNQTNSNFNL. Positions 502-516 are enriched in low complexity; the sequence is SSFSFSNQTNSNFNL.

It belongs to the importin alpha family. Forms a complex with tnpo/importin subunit beta.

Its subcellular location is the cytoplasm. It is found in the nucleus envelope. In terms of biological role, functions in nuclear protein import via a substrate-importin alpha-beta transport complex that passes though the nuclear pore complexes (NPC). Binds specifically and directly to substrates containing either a simple or bipartite NLS motif. The protein is Importin subunit alpha-B of Dictyostelium discoideum (Social amoeba).